The sequence spans 333 residues: Uroporphyrinogen decarboxylase (333 aa).

Substrate contacts are provided by residues 21–25 (RQVGR), Asp70, Tyr139, Ser194, and His309.

The protein belongs to the uroporphyrinogen decarboxylase family. In terms of assembly, homodimer.

Its subcellular location is the cytoplasm. It catalyses the reaction uroporphyrinogen III + 4 H(+) = coproporphyrinogen III + 4 CO2. The protein operates within porphyrin-containing compound metabolism; protoporphyrin-IX biosynthesis; coproporphyrinogen-III from 5-aminolevulinate: step 4/4. In terms of biological role, catalyzes the decarboxylation of four acetate groups of uroporphyrinogen-III to yield coproporphyrinogen-III. This Chlamydia caviae (strain ATCC VR-813 / DSM 19441 / 03DC25 / GPIC) (Chlamydophila caviae) protein is Uroporphyrinogen decarboxylase.